The primary structure comprises 290 residues: uncharacterized protein (290 aa).

7 consecutive transmembrane segments (helical) span residues M40–I60, D80–L100, L110–W130, V139–F159, M166–L188, M200–F220, and W238–S260. A TLC domain is found at K74–H271.

Its subcellular location is the endoplasmic reticulum membrane. This is an uncharacterized protein from Schizosaccharomyces pombe (strain 972 / ATCC 24843) (Fission yeast).